A 388-amino-acid polypeptide reads, in one-letter code: Mannitol-1-phosphate 5-dehydrogenase (388 aa).

Position 5-16 (5-16 (AIQFGGGNIGRG)) interacts with NAD(+). The active site involves Lys-213.

The protein belongs to the mannitol dehydrogenase family. Monomer.

The catalysed reaction is D-mannitol 1-phosphate + NAD(+) = beta-D-fructose 6-phosphate + NADH + H(+). In terms of biological role, catalyzes the NAD(H)-dependent interconversion of D-fructose 6-phosphate and D-mannitol 1-phosphate in the mannitol metabolic pathway. The chain is Mannitol-1-phosphate 5-dehydrogenase (mpdA) from Aspergillus fumigatus (strain CBS 144.89 / FGSC A1163 / CEA10) (Neosartorya fumigata).